Reading from the N-terminus, the 833-residue chain is Leucine--tRNA ligase (833 aa).

Residues 41–52 (PYPSGAGLHVGH) carry the 'HIGH' region motif. The 'KMSKS' region motif lies at 610–614 (KMSKS). K613 contributes to the ATP binding site.

It belongs to the class-I aminoacyl-tRNA synthetase family.

The protein resides in the cytoplasm. The catalysed reaction is tRNA(Leu) + L-leucine + ATP = L-leucyl-tRNA(Leu) + AMP + diphosphate. The protein is Leucine--tRNA ligase of Streptococcus pyogenes serotype M6 (strain ATCC BAA-946 / MGAS10394).